Consider the following 587-residue polypeptide: MKIVRYIALFGILSGLAVACTPSTSVIPNDAIRLNQLGYYPNQEKIAVVDSGKVEEFVIWDAVSGEQVFVGKSLYTAKSAWSDKTRTTLDFSAVTTPGKYILKVNGASVTFLIKDSVLSPLADAALKSFYYQRTAMPIEEQYAGQWHRMAGHPDNHVLIHPSAASPDRPAGTIVSSSKGWYDAGDYNKYIVNSGYSIGLMQSIYQLFLDYFSRQKINIPESNNHTPDLLDEMQFNLDWMLTMQDPEDGGVYHKLTTPFFEGFVKPVDCKQQRYVVQKSVTAALDFAAVMAQSSRLFASYEEDYPGFSKRALLAAEKAYAWAEKHPEAYYNQNLLNQKYQPAIATGEYGDTHADDEFFWAASELYFSTGKEIYREEAIKKAPQIYTAPGWGNTFALGIFAWLQPGRELNEADRRFADSLKTELLKYADKVIEGAEQTPFHAPYGNDAKDFFWGCLAEKCMNQGVSLMYAYLQTGKDVYLTNAYRNMDYILGRNATGFCYVTGLGTKSPKHPHHRLSASDDIEDPIPGFLVGGPNPGQQDGAFYPTASPDESYVDTEDSYASNEVAINWNAALVALASSLDALAVYSVK.

Residues 1 to 19 (MKIVRYIALFGILSGLAVA) form the signal peptide. C20 carries the N-palmitoyl cysteine lipid modification. A lipid anchor (S-diacylglycerol cysteine) is attached at C20. The Nucleophile role is filled by D185. Catalysis depends on residues H511 and D553. Residue E562 is the Proton donor of the active site.

The protein belongs to the glycosyl hydrolase 9 (cellulase E) family.

It localises to the cell outer membrane. The enzyme catalyses xyloglucan + H2O = xyloglucan oligosaccharides.. It functions in the pathway glucan metabolism; xyloglucan degradation. Catalyzes endohydrolysis of 1,4-beta-D-glucosidic linkages in xyloglucan with retention of the beta-configuration of the glycosyl residues in xyloglucan degradation. Cleaves the backbone of the 3 major types of natural xyloglucans (seed galactoxyloglucan from tamarind kernel, dicot fucogalactoxyloglucan from lettuce leaves, and solanaceous arabinogalactoxyloglucan from tomato fruit), to produce xyloglucan oligosaccharides. May be superfluous in xyloglucan degradation compared to BoGH5A (AC A7LXT7), the other Xyloglucan-specific endo-beta-1,4-glucanase. This Bacteroides ovatus (strain ATCC 8483 / DSM 1896 / JCM 5824 / BCRC 10623 / CCUG 4943 / NCTC 11153) protein is Xyloglucan-specific endo-beta-1,4-glucanase BoGH9A.